The sequence spans 773 residues: Protein YhgF (773 aa).

The 70-residue stretch at 651–720 (GMILEGAVTN…QRKRIALTMR (70 aa)) folds into the S1 motif domain. The interval 721–773 (LDEQPGETNARRGGGNERPQNNRPAAKPRGREAQPAGNSAMMDALAAAMGKKR) is disordered.

This chain is Protein YhgF (yhgF), found in Escherichia coli (strain K12).